A 637-amino-acid chain; its full sequence is Chaperone protein HtpG (637 aa).

The segment at Met-1–Arg-338 is a; substrate-binding. The interval Glu-339–Lys-552 is b. Residues Ile-553–Asp-637 are c.

This sequence belongs to the heat shock protein 90 family. As to quaternary structure, homodimer.

The protein localises to the cytoplasm. Its function is as follows. Molecular chaperone. Has ATPase activity. This is Chaperone protein HtpG from Nitrobacter winogradskyi (strain ATCC 25391 / DSM 10237 / CIP 104748 / NCIMB 11846 / Nb-255).